The primary structure comprises 225 residues: RNA chaperone ProQ (225 aa).

The disordered stretch occupies residues 103–173; that stretch reads LEEAKARVQT…APREERHTPV (71 aa). Over residues 109-118 the composition is skewed to low complexity; the sequence is RVQTQRAAQQ. The span at 137–146 shows a compositional bias: basic residues; that stretch reads RERKPRPQQP. The segment covering 147–156 has biased composition (basic and acidic residues); that stretch reads RRKEGAEQRK.

Belongs to the ProQ family.

It is found in the cytoplasm. Its function is as follows. RNA chaperone with significant RNA binding, RNA strand exchange and RNA duplexing activities. May regulate ProP activity through an RNA-based, post-transcriptional mechanism. This Klebsiella pneumoniae (strain 342) protein is RNA chaperone ProQ.